Reading from the N-terminus, the 213-residue chain is ATP synthase peripheral stalk subunit OSCP, mitochondrial (213 aa).

A mitochondrion-targeting transit peptide spans 1–23 (MAAPATSVLSRQVRSFSTSVVRP). The SIFI-degron signature appears at 5-23 (ATSVLSRQVRSFSTSVVRP). K60, K70, and K73 each carry N6-acetyllysine. At K90 the chain carries N6-succinyllysine. K100 and K158 each carry N6-acetyllysine; alternate. 2 positions are modified to N6-succinyllysine; alternate: K100 and K158. N6-acetyllysine is present on residues K176 and K192. At K199 the chain carries N6-succinyllysine.

This sequence belongs to the ATPase delta chain family. As to quaternary structure, component of the ATP synthase complex composed at least of ATP5F1A/subunit alpha, ATP5F1B/subunit beta, ATP5MC1/subunit c (homooctomer), MT-ATP6/subunit a, MT-ATP8/subunit 8, ATP5ME/subunit e, ATP5MF/subunit f, ATP5MG/subunit g, ATP5MK/subunit k, ATP5MJ/subunit j, ATP5F1C/subunit gamma, ATP5F1D/subunit delta, ATP5F1E/subunit epsilon, ATP5PF/subunit F6, ATP5PB/subunit b, ATP5PD/subunit d, ATP5PO/subunit OSCP. ATP synthase complex consists of a soluble F(1) head domain (subunits alpha(3) and beta(3)) - the catalytic core - and a membrane F(0) domain - the membrane proton channel (subunits c, a, 8, e, f, g, k and j). These two domains are linked by a central stalk (subunits gamma, delta, and epsilon) rotating inside the F1 region and a stationary peripheral stalk (subunits F6, b, d, and OSCP). In terms of processing, in response to mitochondrial stress, the precursor protein is ubiquitinated by the SIFI complex in the cytoplasm before mitochondrial import, leading to its degradation. Within the SIFI complex, UBR4 initiates ubiquitin chain that are further elongated or branched by KCMF1. Expressed by the principal cells of the epididymis. Detected in flagella of epididymal sperm (at protein level).

The protein resides in the mitochondrion. It is found in the mitochondrion inner membrane. Its function is as follows. Subunit OSCP, of the mitochondrial membrane ATP synthase complex (F(1)F(0) ATP synthase or Complex V) that produces ATP from ADP in the presence of a proton gradient across the membrane which is generated by electron transport complexes of the respiratory chain. ATP synthase complex consist of a soluble F(1) head domain - the catalytic core - and a membrane F(1) domain - the membrane proton channel. These two domains are linked by a central stalk rotating inside the F(1) region and a stationary peripheral stalk. During catalysis, ATP synthesis in the catalytic domain of F(1) is coupled via a rotary mechanism of the central stalk subunits to proton translocation. In vivo, can only synthesize ATP although its ATP hydrolase activity can be activated artificially in vitro. Part of the complex F(0) domain. Part of the complex F(0) domain and the peripheric stalk, which acts as a stator to hold the catalytic alpha(3)beta(3) subcomplex and subunit a/ATP6 static relative to the rotary elements. In Rattus norvegicus (Rat), this protein is ATP synthase peripheral stalk subunit OSCP, mitochondrial.